The chain runs to 419 residues: UDP-N-acetylglucosamine 1-carboxyvinyltransferase (419 aa).

22-23 (KN) lines the phosphoenolpyruvate pocket. Arg-95 is a binding site for UDP-N-acetyl-alpha-D-glucosamine. Residue Cys-119 is the Proton donor of the active site. 2-(S-cysteinyl)pyruvic acid O-phosphothioketal is present on Cys-119. Residues 164 to 167 (KVSV), Asp-308, and Ile-330 each bind UDP-N-acetyl-alpha-D-glucosamine.

This sequence belongs to the EPSP synthase family. MurA subfamily.

It is found in the cytoplasm. The enzyme catalyses phosphoenolpyruvate + UDP-N-acetyl-alpha-D-glucosamine = UDP-N-acetyl-3-O-(1-carboxyvinyl)-alpha-D-glucosamine + phosphate. Its pathway is cell wall biogenesis; peptidoglycan biosynthesis. Its function is as follows. Cell wall formation. Adds enolpyruvyl to UDP-N-acetylglucosamine. The sequence is that of UDP-N-acetylglucosamine 1-carboxyvinyltransferase from Rickettsia massiliae (strain Mtu5).